A 722-amino-acid polypeptide reads, in one-letter code: Bifunctional UDP-N-acetylglucosamine 2-epimerase/N-acetylmannosamine kinase (722 aa).

R19, S23, R113, H220, and N253 together coordinate UDP. CMP-N-acetyl-beta-neuraminate is bound by residues K259, E271, K280, and H281. V282, S301, S302, E307, and R321 together coordinate UDP. The N-acetylmannosamine kinase stretch occupies residues 406–722 (TLSALAVDLG…VLDYTTRRIH (317 aa)). D413 is a binding site for Mg(2+). G416 serves as a coordination point for an N-acyl-D-mannosamine 6-phosphate. Residues T417, N418, and R420 each contribute to the ADP site. An N-acyl-D-mannosamine 6-phosphate-binding residues include G476, R477, T489, N516, D517, and G545. An N-acyl-D-mannosamine contacts are provided by G476, R477, T489, N516, and D517. Residue D517 is part of the active site. An N-acyl-D-mannosamine is bound by residues E566 and H569. H569 provides a ligand contact to an N-acyl-D-mannosamine 6-phosphate. Positions 569, 579, 581, and 586 each coordinate Zn(2+). E588 provides a ligand contact to an N-acyl-D-mannosamine 6-phosphate. E588 contributes to the an N-acyl-D-mannosamine binding site.

In the N-terminal section; belongs to the UDP-N-acetylglucosamine 2-epimerase family. The protein in the C-terminal section; belongs to the ROK (NagC/XylR) family. As to quaternary structure, homodimer. Homotetramer. Homohexamer. The hexameric form exhibits both enzyme activities, whereas the dimeric form only catalyzes the phosphorylation of N-acyl-D-mannosamine. Post-translationally, phosphorylated. Phosphorylation by PKC activates the UDP-N-acetylglucosamine 2-epimerase activity. As to expression, widely expressed. Highest expression is observed in liver.

It is found in the cytoplasm. Its subcellular location is the cytosol. The enzyme catalyses UDP-N-acetyl-alpha-D-glucosamine + H2O = aldehydo-N-acetyl-D-mannosamine + UDP + H(+). The catalysed reaction is an N-acyl-D-mannosamine + ATP = an N-acyl-D-mannosamine 6-phosphate + ADP + H(+). It functions in the pathway amino-sugar metabolism; N-acetylneuraminate biosynthesis. With respect to regulation, the UDP-N-acetylglucosamine 2-epimerase activity, in contrast to the N-acetylmannosamine kinase activity, exhibits allosteric regulation by cytidine monophosphate-N-acetylneuraminic acid (CMP-Neu5Ac), the end product of neuraminic acid biosynthesis. Moreover, the activity is contingent upon the oligomeric state of the enzyme. The monomeric form is inactive, while the dimeric form selectively catalyzes the phosphorylation of N-acetylmannosamine. The hexameric form, on the other hand, demonstrates full proficiency in both enzyme activities. Furthermore, the UDP-N-acetylglucosamine 2-epimerase activity is increased by PKC-mediated phosphorylation. Its function is as follows. Bifunctional enzyme that possesses both UDP-N-acetylglucosamine 2-epimerase and N-acetylmannosamine kinase activities, and serves as the initiator of the biosynthetic pathway leading to the production of N-acetylneuraminic acid (NeuAc), a critical precursor in the synthesis of sialic acids. By catalyzing this pivotal and rate-limiting step in sialic acid biosynthesis, this enzyme assumes a pivotal role in governing the regulation of cell surface sialylation. Sialic acids represent a category of negatively charged sugars that reside on the surface of cells as terminal components of glycoconjugates and mediate important functions in various cellular processes, including cell adhesion, signal transduction, and cellular recognition. This is Bifunctional UDP-N-acetylglucosamine 2-epimerase/N-acetylmannosamine kinase from Rattus norvegicus (Rat).